Reading from the N-terminus, the 284-residue chain is L-ribulose-5-phosphate 3-epimerase UlaE (284 aa).

This sequence belongs to the L-ribulose-5-phosphate 3-epimerase family.

It carries out the reaction L-ribulose 5-phosphate = L-xylulose 5-phosphate. The protein operates within cofactor degradation; L-ascorbate degradation; D-xylulose 5-phosphate from L-ascorbate: step 3/4. Functionally, catalyzes the isomerization of L-xylulose-5-phosphate to L-ribulose-5-phosphate. Is involved in the anaerobic L-ascorbate utilization. This is L-ribulose-5-phosphate 3-epimerase UlaE from Salmonella typhi.